A 176-amino-acid chain; its full sequence is Sperm-egg fusion protein TMEM95 (176 aa).

The signal sequence occupies residues 1–16; the sequence is MWVLALGGAFLAVAKA. Disulfide bonds link Cys-17/Cys-119, Cys-20/Cys-122, Cys-106/Cys-129, and Cys-110/Cys-135. Residues 17 to 146 are Extracellular-facing; the sequence is CIFCRLQDHA…PDSHDLWDAR (130 aa). 2 N-linked (GlcNAc...) asparagine glycosylation sites follow: Asn-36 and Asn-118. A helical transmembrane segment spans residues 147-167; that stretch reads ILLLCIFGIVLLSGVVSLQVE. The Cytoplasmic segment spans residues 168–176; that stretch reads YLNLQAKDL.

The protein belongs to the TMEM95 family. In terms of assembly, does not interact with sperm-egg fusion proteins IZUMO1 or IZUMO1R/JUNO. N-glycosylated. In terms of tissue distribution, expressed exclusively in testis.

It is found in the cytoplasmic vesicle. The protein resides in the secretory vesicle. The protein localises to the acrosome membrane. Functionally, sperm protein required for fusion of sperm with the egg membrane during fertilization. The chain is Sperm-egg fusion protein TMEM95 from Mus musculus (Mouse).